Here is a 7067-residue protein sequence, read N- to C-terminus: MESLVLGVNEKTHVQLSLPVLQVRDVLVRGFGDSVEEALSEAREHLKNGTCGLVELEKGVLPQLEQPYVFIKRSDALSTNHGHKVVELVAELDGIQFGRSGITLGVLVPHVGETPIAYRNVLLRKNGNKGAGGHSFGIDLKSYDLGDELGTDPIEDYEQNWNTKHGSGALRELTRELNGGVVTRYVDNNFCGPDGYPLECIKDFLARAGKSMCTLSEQLDYIESKRGVYCCREHEHEIVWFTERSEKSYEHQTPFEIKSAKKFDTFKGECPKFVFPLNSKVKVIQPRVEKKKTEGFMGRIRSVYPVATPQECNDMHLSTLMKCNHCDEVSWQTCDFLKATCEQCGTENLVCEGPTTCGYLPTNAVVKMPCPACQDPEVGPEHSVADYHNHSNIETRLRKGGRTKCFGGCVFSYVGCYNKRAYWVPRASANIGANHTGITGENVETLNEDLLEILNRERVNINIVGDFRFNEEVAIILASFSASPSAFIETVKGLDYKSFKVIVESCGNYKVTNGKPVTGAWNIGQQRSILTPLCGFPSQAAGVIRSIFSRTLDAANHSILDLQRAAVTTLDGISEQSLRLVDAMVYTSDLLTNSVVVMAYVTGGLVQQTMQWLSNMLGTAVDKLKPVFTWVEAKLSAGVEFLRDAWEILKFLITGVFDVIKGQIQVATDNIKECVKIFLGVVNKALEMCLDQVTIAGTKLRALNLGEVFIAQSRGLYRQCIRGKEQLQLLMPLKAPKEVTFLEGDAHDTVLTSEEVVLKSGELEALETPIDSFTSGAVVGTPVCINGLMLLELENKEQYCALSPGLLATNNVFRLKGGAPVKGVTFGEDTVLEVQGYKNVKITFELDVRVDKVLNEKCSVYTVESGTEVTEFACVVAEAVVKTLQPVSDLLTPMGIDLDEWSVATFYLFDDAGEEKLSSRMYCSFYPPDEEEDCEECEDEEETCEHEYGTEDDYKGLPLEFGASTETPHVEEEEEEEDWLDDAIEAEPEPEPLPEEPVNQFVGYLKLTDNVAIKCIDIVKEAQSAKPTVIVNAANTHLKHGGGVAGALNKATNGAMQNESDEYIRQNGPLTVGGSCLLSGHNLAEKCLHVVGPNLNAGEDVQLLKRAYENFNSQDVLLAPLLSAGIFGAKPLQSLKMCVEIVRTQVYLAVNDKSLYDQIVLDYLDSLKPKVESPNKEEEPKLEEPKAVQPVAEKPVDVKPKIKACIDEVTTTLEETKFLTNKLLLFADINGKLYQDSQNMLRGEDMSFLEKDAPYIVGDVITSGDITCVIIPAKKSGGTTEMLARALKEVPVAEYITTYPGQGCAGYTLEEAKTALKKCKSAFYVLPSETPNEKEEVLGTVSWNLREMLAHAEETRKLMPICLDVRAIMATIQRKYKGIKVQEGIVDYGVRFFFYTSKEPVASIITKLNSLNEPLVTMPIGYVTHGLNLEEAARCMRSLKAPAVVSVSSPDAVTAYNGYLTSSSKTPEEYFVETTSLAGSYRDWSYSGQRTELGVEFLKRGDKIVYHTTGSPIEFHLDGEVLPLDKLKSLLSLREVKTIKVFTTVDNTNLHTHIVDMSMTYGQQFGPTYLDGADVTKIKPHVNHEGKTFFVLPSDDTLRSEAFEYYHTIDESFLGRYMSALNHTKKWKFPQVGGLTSIKWADNNCYLSSVLLALQQVEVKFNAPALQEAYYRARAGDAANFCALILAYSNKTVGELGDVRETMTHLLQHANLESAKRVLNVVCKHCGQKTTTLKGVEAVMYMGTLSYDELKTGVSIPCVCGRNATQYLVQQESSFVMMSAPPAEYKLQQGAFLCANEYTGNYQCGHYTHITAKETLYRVDGAHLTKMSEYKGPVTDVFYKETSYTTAIKPVSYKLDGVTYTEIEPKLDGYYKKGNAYYTEQPIDLVPTQPMPNASFDNFKLTCSNTKFADDLNQMTGFKKPASRELTVTFFPDLNGDVVAIDYRHYSTSFKKGAKLVHKPILWHINQTTNKTTYKPNIWCLRCLWSTKPVDTSNSFEVLVVEDTQGMDNLACESQTTTSEEVVENPTVQKEIIECDVKTTEVVGNVILKPSEEGVKVTQELGHEDLMAAYVEETSITIKKPNELSLALGLKTLATHGAAAINSVPWSKILAYVKPFLGQTAVITSNCIKKCVQRVFSNYMPYVITLLFQLCTFTKSTNSRIKASLPTTIAKNSVKSVAKLCLDVCINYVKSPKFSKLFTIVMWLLLLSICLGSLTYVTAVLGVCLSSLGVPSYCDGVRELYINSSNVTTMDFCQGYFPCSVCLSGLDSLDSYPALETIQVTISSYKLDLTFLGLAAEWLLAYMLFTKFFYLLGLSAIMQAFFGYFASHFISNSWLMWFIISIVQMAPVSAMVRMYIFFASFYYVWKSYVHIMDGCTSSTCMMCYKRNRATRVECTTIVNGVKRSFYVYANGGRGFCKAHNWNCLNCDTFCAGSTFISDEVARDLSLQFKRPINPTDQSAYVVDSVTVKNGALHLYFDKAGQKTYERHPLSHFVNLDNLRANNTKGSLPINVIVFDGKSKCEESAAKSASVYYSQLMCQPILLLDQALVSDVGDSTEVSVKMFDAYVDTFSATFSVPMEKLKALVATAHSELAKGVALDGVLSTFVSAARQGVVDTDVDTKDVIECLKLSHHSDIEVTGDSCNNFMLTYNKVENMTPRDLGACIDCNARHINAQVAKSHNVSLVWNVKDYMSLSEQLRKQIRSAAKKNNIPFRLTCATTRQVVNVITTKISLKGGKVVSTWFKLLLKVTLLCVLAALFCYVIMPVHSLSVHDGYTNEIIGYKAIQDGVTRDIVSTDDCFANKHAGFDSWFSQRGGSYRNDKNCPVVAAIITREIGFIVPGLPGTVLRALNGDFLHFLPRVFSAVGNICYTPSKLIEYSDFATSACVLAAECTIFKDAMGKPVPYCYDTNLLEGSISYSELRPDTRYVLMDGSIIQFPNTYLEGSVRVVTTFDAEYCRHGTCERSEVGVCLSTSGRWVLNNEHYRALPGVFCGVDAMNLIANIFTPLVQPVGALDVSASVVAGGIIAILVTCAAYYFMKFRRAFGEYNHVVAANALLFLMSFTILCLAPAYSFLPGVYSIFYLYLTFYFTNDVSFLAHLQWFAMFSPIVPFWITAIYVFCISLKHFHWFFSNYLKKRVMFNGVTFSTFEEAALCTFLLNKEMYLRLRSETLLPLTQYNRYLALYNKYKYFSGALDTTSYREAACCHLAKALNDFSNSGADVLYQPPQTSITSAVLQSGFRKMAFPSGKVEGCMVQVTCGTTTLNGLWLDDTVYCPRHVVCTAEDMLNPNYDDLLIRKSNHSFLVQAGNVQLRVIGHSMQNCLLRLKVDTSNPKTPKYKFVRIQPGQTFSVLACYNGSPSGVYQCAMRPNHTIKGSFLNGSCGSVGFNIDYDCVSFCYMHHMELPTGVHAGTDLEGKFYGPFVDRQTAQAAGTDTTITLNVLAWLYAAVINGDRWFLNRFTTTLNDFNLVAMKYNYEPLTQDHVDILGPLSAQTGIAVLDMCAALKELLQNGMNGRTILGSTILEDEFTPFDVVRQCSGVTFQGKFKKIVKGTHHWMLLTFLTSLLILVQSTQWSLFFFVYENAFLPFALGIMAVAACAMLLVKHKHAFLCLFLLPSLATVAYFNMVYMPASWVMRIMTWLELADTSLSGYRLKDCVMYASALVLLILMTARTVYDDAARRVWTLMNVITLVYKVYYGNSLDQAISMWALVISVTSNYSGVVTTIMFLARAIVFVCVEYYPLLFITGNTLQCIMLVYCFLGYCCCCYFGLFCLLNRYFRLTLGVYDYLVSTQEFRYMNSQGLLPPKSSIDAFKLNIKLLGIGGKPCIKVATVQSKMSDVKCTSVVLLSVLQQLRVESSSKLWAQCVQLHNDILLAKDTTEAFEKMVSLLSVLLSMQGAVDINKLCEEMLDNRATLQAIASEFSSLPSYAAYATAQEAYEQAVSNGDSEVVLKKLKKSLNVAKSEFDHDAAMQRKLEKMADQAMTQMYKQARSEDKRAKVTSAMQTMLFTMLRKLDNDALNNIINNARDGCVPLNIIPLTTAAKLMVVVPDYGTYKNTCDGNTFTYASALWEIQQVVDADSKIVQLSEINMDNSPNLAWPLIVTALRANSAVKLQNNELSPVALRQMSCAAGTTQTACTDDNALAYYNNAKGGRFVLALLSDHQDLKWARFPKSDGTGTIYTELEPPCRFVTDTPKGPKVKYLYFIKGLNNLNRGMVLGSLAATVRLQAGNATEVPANSTVLSFCAFAVDPAKAYKDYLASGGQPITNCVKMLCTHTGTGQAITVTPEANMDQESFGGASCCLYCRCHIDHPNPKGFCDLKGKYVQIPTTCANDPVGFTLRNTVCTVCGMWKGYGCSCDQLREPMMQSADASTFLNRVCGVSAARLTPCGTGTSTDVVYRAFDIYNEKVAGFAKFLKTNCCRFQEKDEEGNLLDSYFVVKRHTMSNYQHEETIYNLIKECPAVAVHDFFKFRVDGDMVPHISRQRLTKYTMADLVYALRHFDEGNCDTLKEILVTYNCCDDNYFNKKDWYDFVENPDVLRVYANLGERVRRALLKTVQFCDAMRDAGIVGVLTLDNQDLNGNWYDFGDFVQVAPGCGVPIVDSYYSLLMPILTLTKALAAESHMDADLAKPLVKWDLLKYDFTEERLCLFDRYFKYWDQTYHPNCINCLDDRCILHCANFNVLFSTVFPPTSFGPLVRKIFVDGVPFVVSTGYHFRELGVVHNQDVNLHSSRLSFKELLVYAADPAMHAASGNLLLDKRTTCFSVAALTNNVAFQTVKPGNFNKDFYDFAVSKGFFKEGSSVELKHFFFAQDGNAAISDYDYYRYNLPTMCDIRQLLFVVEVVDKYFDCYDGGCINANQVIVNNLDKSAGFPFNKWGKARLYYDSMSYEDQDALFAYTKRNVIPTITQMNLKYAISAKNRARTVAGVSICSTMTNRQFHQKLLKSIAATRGATVVIGTSKFYGGWHNMLKTVYSDVESPHLMGWDYPKCDRAMPNMLRIMASLILARKHSTCCNLSHRFYRLANECAQVLSEMVMCGGSLYVKPGGTSSGDATTAYANSVFNICQAVTANVNALLSTDGNKIADKYVRNLQHRLYECLYRNRDVDHEFVDEFYAYLRKHFSMMILSDDAVVCYNSNYAAQGLVASIKNFKAVLYYQNNVFMSEAKCWTETDLTRGPHEFCSQHTMLVKQGDDYVYLPYPDPSRILGAGCFVDDIVKTDGTLMIERFVSLAIDAYPLTKHPNQEYADVFHLYLQYIRKLHDELTGHMLDMYSVMLTNDNTSRYWEPEFYEAMYTPHTVLQAVGACVLCNSQTSLRCGACIRRPFLCCKCCYDHVISTSHKLVLSVNPYVCNAPGCDVTDVTQLYLGGMSYYCKSHKPPISFPLCANGQVFGLYKNTCVGSDNVTDFNAIATCDWTNAGDYILANTCTERLKLFAAETLKATEETFKLSYGIATVREVLSDRELYLSWEVGKPRPPLNRNYVFTGYRVTKNSKVQIGEYTFEKGDYGDAVVYRGTTTYKLNVGDYFVLTSHTVMPLSAPTLVPQEHYVRITGLYPTLNISNEFSSNVANYQKIGMQKYSTLQGPPGTGKSHFAIGLALYYPSARIVYTACSHAAVDALCEKALKYLPIDKCSRIIPARARVECFDKFKVNSTLEQYVFCTVNALPETTADIVVFDEISMATNYDLSVVNARLRAKHYVYIGDPAQLPAPRTLLTKGTLEPEYFNSVCRLMKTIGPDMFLGTCRRCPAEIVDTVSALVYDNKLKAHKEKSAQCFKMYYKGVITHDVSSAINRPQIGVVREFLTRNPAWRKAVFISPYNSQNAVASKILGLPTQTVDSSQGSEYDYVIFTQTTETAHSCNVNRFNVAITRAKIGILCIMSDRDLYDKLQFTSLEVPRRNVATLQAENVTGLFKDCSKIITGLHPTQAPTHLSVDTKFKTEGLCVDIPGIPKDMTYRRLISMMGFKMNYQVNGYPNMFITREEAIRHVRAWIGFDVEGCHATRDAVGTNLPLQLGFSTGVNLVAVPTGYVDTENSTEFTRVNAKPPPGDQFKHLIPLMYKGLPWNVVRIKIVQMLSDTLKGLSDRVVFVLWAHGFELTSMKYFVKIGPERTCCLCDKRATCFSTSSDTYACWNHSVGFDYVYNPFMIDVQQWGFTGNLQSNHDQHCQVHGNAHVASCDAIMTRCLAVHECFVKRVDWSVEYPIIGDELKINAACRKVQHMVVKSALLADKFTVLHDIGNPKAIRCVPQAEVDWKFYDAQPCSDKAYKIEELFYSYATHHDKFTDGVCLFWNCNVDRYPANAIVCRFDTRVLSNLNLPGCDGGSLYVNKHAFHTPAFDKSAFTHLKQLPFFYYSDSPCESHGKQVVSDIDYVPLKSATCITRCNLGGAVCRHHANEYRQYLDAYNMMISAGFSLWIYKQFDTYNLWNTFTKLQSLENVAYNVVNKGHFDGQSGEAPVSIINNAVYTKVDGIDVEIFENKTTLPVNVAFELWAKRNIKPVPEIKILNNLGVDIAANNVIWDYKREAPAHVSTIGVCTMTDIAKKPTESACSSLIVLFDGRVEGQVDFFRNARNGVLITEGSVKGLTPSKGPAQASVNGVTLIGESVKTQFNYFKKVDGIIQQLPETYFTQSRDLEDFKPRSQMETDFLELAMDEFIQRYKLEGYAFEHIVYGDFSHGQLGGLHLMIGLAKRSQDSLLKLEDFIPMDSTVKNYFITDAQTGSSKCVCSVIDLLLDDFVEIIKSQDLSVVSKVVKVTIDYAEISFMLWCKDGHVETFYPKLQASQAWQPGVAMPNLYKMQRMLLEKCDLQNYGENAVIPKGIMMNVAKYTQLCQYLNTLTLAVPYNMRVIHFGAGSDKGVAPGTAVLRQWLPTGTLLVDSDLNDFVSDADSTLIGDCATVHTANKWDLIISDMYDPKTKHVLKDNDSKEGFFTYLCGFIKQKLALGGSVAVKITEHSWNADLYKLMGHFSWWTAFVTNVNASSSEAFLIGVNYLGKPKEQIDGYTMHANYIFWRNTNPIQLSSYSLFDMSKFPLKLRGTAVMSLKENQINDMIYSLLEKGRLIIRENNRVVVSSDILVNN.

In terms of domain architecture, CoV Nsp1 globular spans 12–127 (THVQLSLPVL…YRNVLLRKNG (116 aa)). A BetaCoV Nsp1 C-terminal domain is found at 148–179 (ELGTDPIEDYEQNWNTKHGSGALRELTRELNG). The CoV Nsp2 N-terminal domain occupies 183–456 (TRYVDNNFCG…NEDLLEILNR (274 aa)). Zn(2+) contacts are provided by C200, C231, H234, H236, C323, C326, C341, C344, C370, C373, H382, and C416. The tract at residues 200–236 (CIKDFLARAGKSMCTLSEQLDYIESKRGVYCCREHEH) is C2H2. The tract at residues 323–344 (CNHCDEVSWQTCDFLKATCEQC) is C4. The tract at residues 370 to 416 (CPACQDPEVGPEHSVADYHNHSNIETRLRKGGRTKCFGGCVFSYVGC) is C2HC. Residues 458-688 (RVNINIVGDF…LGVVNKALEM (231 aa)) enclose the CoV Nsp2 middle domain. Residues 690 to 818 (LDQVTIAGTK…TNNVFRLKGG (129 aa)) form the CoV Nsp2 C-terminal domain. The Ubiquitin-like 1 domain occupies 822 to 930 (KGVTFGEDTV…MYCSFYPPDE (109 aa)). Macro domains lie at 998–1164 (VNQF…LDYL), 1201–1329 (KIKA…LPSE), and 1337–1464 (VLGT…TSSS). The 67-residue stretch at 1466–1532 (TPEEYFVETT…PLDKLKSLLS (67 aa)) folds into the DPUP domain. The Ubiquitin-like 2 domain maps to 1536–1591 (VKTIKVFTTVDNTNLHTHIVDMSMTYGQQFGPTYLDGADVTKIKPHVNHEGKTFFV). In terms of domain architecture, Peptidase C16 spans 1605–1869 (YYHTIDESFL…YTEIEPKLDG (265 aa)). Residue C1645 is the For PL-PRO activity of the active site. C1723, C1726, C1758, and C1760 together coordinate Zn(2+). A C4-type zinc finger spans residues 1723-1760 (CKHCGQKTTTLKGVEAVMYMGTLSYDELKTGVSIPCVC). Active-site for PL-PRO activity residues include H1806 and D1820. One can recognise a Nucleic acid-binding domain in the interval 1882–1992 (PIDLVPTQPM…CLWSTKPVDT (111 aa)). Positions 2017 to 2126 (TTSEEVVENP…LGQTAVITSN (110 aa)) constitute a G2M domain. Residues 2086-2365 (LALGLKTLAT…IFFASFYYVW (280 aa)) form an HD1 region. The chain crosses the membrane as a helical span at residues 2197–2217 (LFTIVMWLLLLSICLGSLTYV). Residues 2218 to 2288 (TAVLGVCLSS…QVTISSYKLD (71 aa)) form the 3Ecto domain. Intrachain disulfides connect C2234/C2262 and C2253/C2259. 2 consecutive transmembrane segments (helical) span residues 2298-2318 (WLLA…SAIM) and 2345-2365 (MAPV…YYVW). Residues 2366–2456 (KSYVHIMDGC…QFKRPINPTD (91 aa)) are Y1. In terms of domain architecture, CoV Nsp3 Y spans 2366–2734 (KSYVHIMDGC…ITTKISLKGG (369 aa)). Zn(2+) is bound by residues H2370, C2375, C2380, C2383, C2416, H2419, C2423, and C2426. Positions 2370–2383 (HIMDGCTSSTCMMC) are ZF1. Residues 2416–2426 (CKAHNWNCLNC) form a ZF2 region. Positions 2457 to 2551 (QSAYVVDSVT…LLDQALVSDV (95 aa)) are Y2. Residues 2457-2734 (QSAYVVDSVT…ITTKISLKGG (278 aa)) form a coV-Y region. Residues 2552–2633 (GDSTEVSVKM…ECLKLSHHSD (82 aa)) form a Y3 region. Residues 2634 to 2734 (IEVTGDSCNN…ITTKISLKGG (101 aa)) form a Y4 region. 7 helical membrane passes run 2744 to 2764 (LLKV…IMPV), 2986 to 3006 (PGVF…TPLV), 3016 to 3036 (ASVV…YYFM), 3048 to 3068 (VVAA…LAPA), 3071 to 3091 (FLPG…TNDV), 3099 to 3119 (WFAM…VFCI), and 3136 to 3156 (VMFN…TFLL). The tract at residues 2749–3156 (LLCVLAALFC…EEAALCTFLL (408 aa)) is HD2. In terms of domain architecture, Nsp4C spans 3136–3234 (VMFNGVTFST…QTSITSAVLQ (99 aa)). The 306-residue stretch at 3235-3540 (SGFRKMAFPS…VRQCSGVTFQ (306 aa)) folds into the Peptidase C30 domain. Catalysis depends on for 3CL-PRO activity residues H3275 and C3379. Helical transmembrane passes span 3558-3578 (FLTS…FFVY), 3580-3600 (NAFL…MLLV), 3606-3626 (FLCL…MVYM), 3652-3672 (DCVM…RTVY), 3679-3698 (VWTL…GNSL), 3722-3742 (IMFL…LLFI), and 3750-3770 (IMLV…LFCL). Residues 3558 to 3770 (FLTSLLILVQ…CCCYFGLFCL (213 aa)) form an HD3 region. The 83-residue stretch at 3831 to 3913 (SKMSDVKCTS…EMLDNRATLQ (83 aa)) folds into the RdRp Nsp7 cofactor domain. Positions 3914-4111 (AIASEFSSLP…LRANSAVKLQ (198 aa)) constitute a RdRp Nsp8 cofactor domain. Residues 4112–4224 (NNELSPVALR…GSLAATVRLQ (113 aa)) form the Nsp9 ssRNA-binding domain. The region spanning 4225–4363 (AGNATEVPAN…CDQLREPMMQ (139 aa)) is the ExoN/MTase coactivator domain. Residues C4298, C4301, H4307, C4314, C4341, C4344, C4352, and C4354 each contribute to the Zn(2+) site. 2 zinc fingers span residues 4298–4314 (CLYC…KGFC) and 4341–4354 (CTVC…GCSC). The 255-residue stretch at 4370–4624 (FLNRVCGVSA…AAESHMDADL (255 aa)) folds into the NiRAN domain. Mn(2+) contacts are provided by N4572 and D4581. One can recognise a Nsp12 Interface domain in the interval 4629 to 4727 (VKWDLLKYDF…HNQDVNLHSS (99 aa)). Zn(2+)-binding residues include H4658, C4664, C4669, C4673, and C4850. One can recognise a Nsp12 RNA-dependent RNA polymerase domain in the interval 4728 to 5295 (RLSFKELLVY…AMYTPHTVLQ (568 aa)). Positions 4730 to 4944 (SFKELLVYAA…HQKLLKSIAA (215 aa)) are rdRp Fingers N-ter. Residues 4945–4983 (TRGATVVIGTSKFYGGWHNMLKTVYSDVESPHLMGWDYP) form a rdRp Palm N-ter region. The region spanning 4975–5137 (PHLMGWDYPK…CYNSNYAAQG (163 aa)) is the RdRp catalytic domain. The interval 4984 to 5042 (KCDRAMPNMLRIMASLILARKHSTCCNLSHRFYRLANECAQVLSEMVMCGGSLYVKPGG) is rdRp Fingers C-ter. Residues H5005, C5008, and C5009 each contribute to the Zn(2+) site. The tract at residues 5043–5178 (TSSGDATTAY…TRGPHEFCSQ (136 aa)) is rdRp Palm C-ter. Catalysis depends on residues S5122, D5123, and D5124. Residues 5179-5295 (HTMLVKQGDD…AMYTPHTVLQ (117 aa)) are rdRp Thumb. The CV ZBD domain occupies 5296-5408 (AVGACVLCNS…TDFNAIATCD (113 aa)). Residues C5300, C5303, C5311, C5314, C5321, C5324, H5328, H5334, C5345, C5350, C5367, and H5370 each contribute to the Zn(2+) site. Residues 5552-5733 (NISNEFSSNV…MKTIGPDMFL (182 aa)) enclose the (+)RNA virus helicase ATP-binding domain. 5577–5584 (GPPGTGKS) is an ATP binding site. The (+)RNA virus helicase C-terminal domain maps to 5734–5903 (GTCRRCPAEI…TLQAENVTGL (170 aa)). Residues 5968 to 6183 (MFITREEAIR…RCLAVHECFV (216 aa)) form the ExoN domain. Catalysis depends on residues D5986, E5988, and E6087. Zn(2+)-binding residues include C6103, C6106, C6122, H6125, H6153, C6157, and H6160. Catalysis depends on residues H6164 and D6169. C6175 provides a ligand contact to Zn(2+). The 232-residue stretch at 6192 to 6423 (YPIIGDELKI…NLWNTFTKLQ (232 aa)) folds into the N7-MTase domain. 6227–6233 (DIGNPKA) provides a ligand contact to S-adenosyl-L-methionine. The interval 6310–6324 (CDGGSLYVNKHAFHT) is gpppA-binding. The Zn(2+) site is built by C6348, C6369, C6380, and H6383. Residues 6424–6484 (SLENVAYNVV…NVAFELWAKR (61 aa)) form the Nsp15 N-terminal oligomerization domain. Residues 6485 to 6610 (NIKPVPEIKI…YFKKVDGIIQ (126 aa)) form the AV-Nsp11N/CoV-Nsp15M domain. The 140-residue stretch at 6627–6766 (KPRSQMETDF…KDGHVETFYP (140 aa)) folds into the NendoU domain. Catalysis depends on residues H6657, H6672, K6712, K6815, D6899, K6939, and E6972. A Nidovirus-type SAM-dependent 2'-O-MTase domain is found at 6771-7065 (SQAWQPGVAM…RVVVSSDILV (295 aa)).

It belongs to the coronaviruses polyprotein 1ab family. Interacts with host PHB and PHB2. In terms of assembly, interacts with papain-like protease nsp3 and non-structural protein 6. As to quaternary structure, monomer. Homodimer. Only the homodimer shows catalytic activity. Interacts with nsp8 and nsp12 to form the replication-transcription complex (RTC): nsp12, nsp7, two subunits of nsp8, and up to two subunits of nsp13. In terms of assembly, interacts with nsp7, nsp13 and nsp12 to form the replication-transcription complex (RTC): nsp12, nsp7, two subunits of nsp8, and up to two subunits of nsp13. As to quaternary structure, interacts with nsp12. Interacts with proofreading exoribonuclease nsp14 and 2'-O-methyltransferase nsp16; these interactions enhance nsp14 and nsp16 enzymatic activities. In terms of assembly, interacts with nsp7 and nsp8 to form the replication-transcription complex (RTC): nsp12, nsp7, two subunits of nsp8, and up to two subunits of nsp13. Interacts with nsp9. As to quaternary structure, interacts with nsp8 to form the replication-transcription complex (RTC): nsp12, nsp7, two subunits of nsp8, and up to two subunits of nsp13. It depends on Mn(2+) as a cofactor. Mg(2+) serves as cofactor. Post-translationally, specific enzymatic cleavages in vivo by its own proteases yield mature proteins. 3CL-PRO and PL-PRO proteinases are autocatalytically processed.

It localises to the host membrane. Its subcellular location is the host cytoplasm. It is found in the host perinuclear region. The protein resides in the host endoplasmic reticulum-Golgi intermediate compartment. The enzyme catalyses RNA(n) + a ribonucleoside 5'-triphosphate = RNA(n+1) + diphosphate. The catalysed reaction is ATP + H2O = ADP + phosphate + H(+). It carries out the reaction Thiol-dependent hydrolysis of ester, thioester, amide, peptide and isopeptide bonds formed by the C-terminal Gly of ubiquitin (a 76-residue protein attached to proteins as an intracellular targeting signal).. It catalyses the reaction a 5'-end (N(7)-methyl 5'-triphosphoguanosine)-ribonucleoside in mRNA + S-adenosyl-L-methionine = a 5'-end (N(7)-methyl 5'-triphosphoguanosine)-(2'-O-methyl-ribonucleoside) in mRNA + S-adenosyl-L-homocysteine + H(+). The enzyme catalyses uridylyl-uridylyl-ribonucleotide-RNA = a 3'-end uridylyl-2',3'-cyclophospho-uridine-RNA + a 5'-end dephospho-ribonucleoside-RNA. The catalysed reaction is a 5'-end diphospho-ribonucleoside in mRNA + GTP + H(+) = a 5'-end (5'-triphosphoguanosine)-ribonucleoside in mRNA + diphosphate. It carries out the reaction a 5'-end (5'-triphosphoguanosine)-ribonucleoside in mRNA + S-adenosyl-L-methionine = a 5'-end (N(7)-methyl 5'-triphosphoguanosine)-ribonucleoside in mRNA + S-adenosyl-L-homocysteine. Its function is as follows. The replicase polyprotein of coronaviruses is a multifunctional protein: it contains the activities necessary for the transcription of negative stranded RNA, leader RNA, subgenomic mRNAs and progeny virion RNA as well as proteinases responsible for the cleavage of the polyprotein into functional products. In terms of biological role, inhibits host translation by interacting with the 40S ribosomal subunit. The nsp1-40S ribosome complex further induces an endonucleolytic cleavage near the 5'UTR of host mRNAs, targeting them for degradation. Viral mRNAs are not susceptible to nsp1-mediated endonucleolytic RNA cleavage thanks to the presence of a 5'-end leader sequence and are therefore protected from degradation. By suppressing host gene expression, nsp1 facilitates efficient viral gene expression in infected cells and evasion from host immune response. Functionally, may play a role in the modulation of host cell survival signaling pathway by interacting with host PHB and PHB2. Indeed, these two proteins play a role in maintaining the functional integrity of the mitochondria and protecting cells from various stresses. Responsible for the cleavages located at the N-terminus of the replicase polyprotein. In addition, PL-PRO possesses a deubiquitinating/deISGylating activity and processes both 'Lys-48'- and 'Lys-63'-linked polyubiquitin chains from cellular substrates. Participates together with nsp4 in the assembly of virally-induced cytoplasmic double-membrane vesicles necessary for viral replication. Antagonizes innate immune induction of type I interferon by blocking the phosphorylation, dimerization and subsequent nuclear translocation of host IRF3. Also prevents host NF-kappa-B signaling. Its function is as follows. Participates in the assembly of virally-induced cytoplasmic double-membrane vesicles necessary for viral replication. In terms of biological role, cleaves the C-terminus of replicase polyprotein at 11 sites. Recognizes substrates containing the core sequence [ILMVF]-Q-|-[SGACN]. Also able to bind an ADP-ribose-1''-phosphate (ADRP). Functionally, plays a role in the initial induction of autophagosomes from host endoplasmic reticulum. Later, limits the expansion of these phagosomes that are no longer able to deliver viral components to lysosomes. Forms a hexadecamer with nsp8 (8 subunits of each) that may participate in viral replication by acting as a primase. Alternatively, may synthesize substantially longer products than oligonucleotide primers. Its function is as follows. Forms a hexadecamer with nsp7 (8 subunits of each) that may participate in viral replication by acting as a primase. Alternatively, may synthesize substantially longer products than oligonucleotide primers. In terms of biological role, forms a primer, NSP9-pU, which is utilized by the polymerase for the initiation of RNA chains. Interacts with ribosome signal recognition particle RNA (SRP). Together with NSP8, suppress protein integration into the cell membrane, thereby disrupting host immune defenses. Functionally, plays a pivotal role in viral transcription by stimulating both nsp14 3'-5' exoribonuclease and nsp16 2'-O-methyltransferase activities. Therefore plays an essential role in viral mRNAs cap methylation. RNA-directed RNA polymerase that catalyzes the transcription of viral genomic and subgenomic RNAs. Acts in complex with nsp7 and nsp8 to transcribe both the minus and positive strands of genomic RNA. The kinase-like NiRAN domain of NSP12 attaches one or more nucleotides to the amino terminus of NSP9, forming a covalent RNA-protein intermediate that serves as transcription/replication primer. Subgenomic RNAs (sgRNAs) are formed by discontinuous transcription: The polymerase has the ability to pause at transcription-regulating sequences (TRS) and jump to the leader TRS, resulting in a major deletion. This creates a series of subgenomic RNAs that are replicated, transcribed and translated. In addition, Nsp12 is a subunit of the viral RNA capping enzyme that catalyzes the RNA guanylyltransferase reaction for genomic and sub-genomic RNAs. Subsequently, the NiRAN domain transfers RNA to GDP, and forms the core cap structure GpppA-RNA. Its function is as follows. Multi-functional protein with a zinc-binding domain in N-terminus displaying RNA and DNA duplex-unwinding activities with 5' to 3' polarity. Activity of helicase is dependent on magnesium. In terms of biological role, plays a role in viral RNA synthesis through two distinct activities. The N7-guanine methyltransferase activity plays a role in the formation of the cap structure GpppA-RNA. The proofreading exoribonuclease reduces the sensitivity of the virus to RNA mutagens during replication. This activity acts on both ssRNA and dsRNA in a 3'-5' direction. Functionally, plays a role in viral transcription/replication and prevents the simultaneous activation of host cell dsRNA sensors, such as MDA5/IFIH1, OAS, and PKR. Acts by degrading the 5'-polyuridines generated during replication of the poly(A) region of viral genomic and subgenomic RNAs. Catalyzes a two-step reaction in which a 2'3'-cyclic phosphate (2'3'-cP) is first generated by 2'-O transesterification, which is then hydrolyzed to a 3'-phosphate (3'-P). If not degraded, poly(U) RNA would hybridize with poly(A) RNA tails and activate host dsRNA sensors. Methyltransferase that mediates mRNA cap 2'-O-ribose methylation to the 5'-cap structure of viral mRNAs. N7-methyl guanosine cap is a prerequisite for binding of nsp16. Therefore plays an essential role in viral mRNAs cap methylation which is essential to evade immune system. This chain is Replicase polyprotein 1ab (rep), found in Bat coronavirus HKU3 (BtCoV).